We begin with the raw amino-acid sequence, 506 residues long: Chorion-specific transcription factor GCMb (506 aa).

Positions 19–174 (LSWDINDPQM…KSETEARRSA (156 aa)) form a DNA-binding region, GCM. The Zn(2+) site is built by Cys-81, Cys-87, Cys-91, Cys-118, Cys-121, Cys-130, His-157, and His-159. Positions 155 to 172 (GVHDHPRPESKSETEARR) are enriched in basic and acidic residues. Residues 155–213 (GVHDHPRPESKSETEARRSAIKRQMASFYQPQKKRIRESEAEENQDSSGHFSNIPPLEN) form a disordered region. A C-terminal conserved inhibitory domain (CCID) region spans residues 379 to 395 (LQTVITTTTKVSYQAYQ).

The protein localises to the nucleus. Functionally, transcription factor that binds specific sequences on gene promoters and activate their transcription. Through the regulation of gene transcription, may play a role in parathyroid gland development. The polypeptide is Chorion-specific transcription factor GCMb (Homo sapiens (Human)).